We begin with the raw amino-acid sequence, 489 residues long: 3-octaprenyl-4-hydroxybenzoate carboxy-lyase (489 aa).

Position 172 (Asn172) interacts with Mn(2+). Prenylated FMN-binding positions include Ile175–Arg177, Arg189–Leu191, and Arg194–Gly195. Residue Glu238 participates in Mn(2+) binding. Catalysis depends on Asp287, which acts as the Proton donor.

This sequence belongs to the UbiD family. In terms of assembly, homohexamer. It depends on prenylated FMN as a cofactor. The cofactor is Mn(2+).

Its subcellular location is the cell membrane. The enzyme catalyses a 4-hydroxy-3-(all-trans-polyprenyl)benzoate + H(+) = a 2-(all-trans-polyprenyl)phenol + CO2. Its pathway is cofactor biosynthesis; ubiquinone biosynthesis. Functionally, catalyzes the decarboxylation of 3-octaprenyl-4-hydroxy benzoate to 2-octaprenylphenol, an intermediate step in ubiquinone biosynthesis. This Salmonella paratyphi B (strain ATCC BAA-1250 / SPB7) protein is 3-octaprenyl-4-hydroxybenzoate carboxy-lyase.